A 962-amino-acid chain; its full sequence is Protease 3 (962 aa).

The signal sequence occupies residues 1–23 (MPRSTWFKALLLLVALWAPLSQA). His88 contributes to the Zn(2+) binding site. The active-site Proton acceptor is Glu91. Zn(2+) is bound by residues His92 and Glu169.

The protein belongs to the peptidase M16 family. In terms of assembly, monomer. It depends on Zn(2+) as a cofactor.

The protein resides in the periplasm. The catalysed reaction is Preferential cleavage of 16-Tyr-|-Leu-17 and 25-Phe-|-Tyr-26 bonds of oxidized insulin B chain. Also acts on other substrates of Mw less than 7 kDa such as insulin and glucagon.. Endopeptidase that degrades small peptides of less than 7 kDa, such as glucagon and insulin. The polypeptide is Protease 3 (ptrA) (Escherichia coli (strain K12)).